The sequence spans 475 residues: Sulfate adenylyltransferase subunit 1 (475 aa).

The tr-type G domain maps to 25–239 (KSLLRFLTCG…EVLETVEIQR (215 aa)). Residues 34 to 41 (GSVDDGKS) are G1. 34-41 (GSVDDGKS) is a GTP binding site. The tract at residues 92-96 (GITID) is G2. A G3 region spans residues 113-116 (DTPG). GTP contacts are provided by residues 113 to 117 (DTPGH) and 168 to 171 (NKMD). Positions 168-171 (NKMD) are G4. The segment at 206–208 (SAL) is G5.

This sequence belongs to the TRAFAC class translation factor GTPase superfamily. Classic translation factor GTPase family. CysN/NodQ subfamily. In terms of assembly, heterodimer composed of CysD, the smaller subunit, and CysN.

It catalyses the reaction sulfate + ATP + H(+) = adenosine 5'-phosphosulfate + diphosphate. Its pathway is sulfur metabolism; hydrogen sulfide biosynthesis; sulfite from sulfate: step 1/3. In terms of biological role, with CysD forms the ATP sulfurylase (ATPS) that catalyzes the adenylation of sulfate producing adenosine 5'-phosphosulfate (APS) and diphosphate, the first enzymatic step in sulfur assimilation pathway. APS synthesis involves the formation of a high-energy phosphoric-sulfuric acid anhydride bond driven by GTP hydrolysis by CysN coupled to ATP hydrolysis by CysD. This Escherichia coli O127:H6 (strain E2348/69 / EPEC) protein is Sulfate adenylyltransferase subunit 1.